Reading from the N-terminus, the 687-residue chain is Putative secreted metallopeptidase (687 aa).

An N-terminal signal peptide occupies residues 1 to 22; that stretch reads MLFTSTAVAALSGALLIQPALA. Residues Asn-54, Asn-114, Asn-252, Asn-256, and Asn-379 are each glycosylated (N-linked (GlcNAc...) asparagine).

The protein belongs to the peptidase M10B family.

The protein resides in the secreted. The polypeptide is Putative secreted metallopeptidase (Arthroderma benhamiae (strain ATCC MYA-4681 / CBS 112371) (Trichophyton mentagrophytes)).